The following is a 264-amino-acid chain: Agamous-like MADS-box protein AGL15 (264 aa).

The region spanning 3-57 (RGKIEIKRIENANSRQVTFSKRRAGLLKKAHELSVLCDAEVAVIVFSKSGKLFEF) is the MADS-box domain. The 91-residue stretch at 87 to 177 (NQEECTEVDL…RRQVQELRSF (91 aa)) folds into the K-box domain. The disordered stretch occupies residues 223–264 (LQLGLPGEAHDTRKNEGDRESPSSDSVTTSTTRATAQRISLV). Residues 230 to 244 (EAHDTRKNEGDRESP) are compositionally biased toward basic and acidic residues. The segment covering 245–257 (SSDSVTTSTTRAT) has biased composition (low complexity).

It is found in the nucleus. Its function is as follows. Probable transcription factor. The protein is Agamous-like MADS-box protein AGL15 (AGL15) of Brassica napus (Rape).